A 227-amino-acid chain; its full sequence is Cytochrome c oxidase subunit 2 (227 aa).

The Mitochondrial intermembrane portion of the chain corresponds to 1-14 (MAYPFQLGLQDATS). A helical membrane pass occupies residues 15–45 (PIMEELTNFHDHTLMIVFLISSLVLYIISLM). At 46-59 (LTTKLTHTNTMDAQ) the chain is on the mitochondrial matrix side. The chain crosses the membrane as a helical span at residues 60-87 (EVETIWTILPAVILILIALPSLRILYMM). The Mitochondrial intermembrane segment spans residues 88–227 (DEINNPALTV…HFENWSASMI (140 aa)). Residues His161, Cys196, Glu198, Cys200, His204, and Met207 each contribute to the Cu cation site. Residue Glu198 participates in Mg(2+) binding.

It belongs to the cytochrome c oxidase subunit 2 family. Component of the cytochrome c oxidase (complex IV, CIV), a multisubunit enzyme composed of 14 subunits. The complex is composed of a catalytic core of 3 subunits MT-CO1, MT-CO2 and MT-CO3, encoded in the mitochondrial DNA, and 11 supernumerary subunits COX4I, COX5A, COX5B, COX6A, COX6B, COX6C, COX7A, COX7B, COX7C, COX8 and NDUFA4, which are encoded in the nuclear genome. The complex exists as a monomer or a dimer and forms supercomplexes (SCs) in the inner mitochondrial membrane with NADH-ubiquinone oxidoreductase (complex I, CI) and ubiquinol-cytochrome c oxidoreductase (cytochrome b-c1 complex, complex III, CIII), resulting in different assemblies (supercomplex SCI(1)III(2)IV(1) and megacomplex MCI(2)III(2)IV(2)). Found in a complex with TMEM177, COA6, COX18, COX20, SCO1 and SCO2. Interacts with TMEM177 in a COX20-dependent manner. Interacts with COX20. Interacts with COX16. It depends on Cu cation as a cofactor.

Its subcellular location is the mitochondrion inner membrane. It catalyses the reaction 4 Fe(II)-[cytochrome c] + O2 + 8 H(+)(in) = 4 Fe(III)-[cytochrome c] + 2 H2O + 4 H(+)(out). Its function is as follows. Component of the cytochrome c oxidase, the last enzyme in the mitochondrial electron transport chain which drives oxidative phosphorylation. The respiratory chain contains 3 multisubunit complexes succinate dehydrogenase (complex II, CII), ubiquinol-cytochrome c oxidoreductase (cytochrome b-c1 complex, complex III, CIII) and cytochrome c oxidase (complex IV, CIV), that cooperate to transfer electrons derived from NADH and succinate to molecular oxygen, creating an electrochemical gradient over the inner membrane that drives transmembrane transport and the ATP synthase. Cytochrome c oxidase is the component of the respiratory chain that catalyzes the reduction of oxygen to water. Electrons originating from reduced cytochrome c in the intermembrane space (IMS) are transferred via the dinuclear copper A center (CU(A)) of subunit 2 and heme A of subunit 1 to the active site in subunit 1, a binuclear center (BNC) formed by heme A3 and copper B (CU(B)). The BNC reduces molecular oxygen to 2 water molecules using 4 electrons from cytochrome c in the IMS and 4 protons from the mitochondrial matrix. The polypeptide is Cytochrome c oxidase subunit 2 (MT-CO2) (Sundamys muelleri (Mueller's giant sunda rat)).